The sequence spans 440 residues: Cytochrome b (440 aa).

A helical membrane pass occupies residues Ile-46 to Val-66. Residues His-97 and His-111 each coordinate heme b. 9 helical membrane-spanning segments follow: residues Gly-100–Ser-120, Trp-129–Leu-149, Phe-156–Ile-176, Phe-194–Trp-214, Leu-253–Tyr-273, Trp-296–Val-315, Phe-330–Asp-350, Trp-365–Ala-385, and Leu-394–Ile-414. 2 residues coordinate heme b: His-198 and His-212.

Belongs to the cytochrome b family. The main subunits of complex b-c1 are: cytochrome b, cytochrome c1 and the Rieske protein. Heme b is required as a cofactor.

It is found in the cell membrane. Component of the ubiquinol-cytochrome c reductase complex (complex III or cytochrome b-c1 complex), which is a respiratory chain that generates an electrochemical potential coupled to ATP synthesis. The sequence is that of Cytochrome b (petB) from Paracoccus denitrificans.